An 86-amino-acid polypeptide reads, in one-letter code: Cell division topological specificity factor (86 aa).

The protein belongs to the MinE family.

Functionally, prevents the cell division inhibition by proteins MinC and MinD at internal division sites while permitting inhibition at polar sites. This ensures cell division at the proper site by restricting the formation of a division septum at the midpoint of the long axis of the cell. This is Cell division topological specificity factor from Allorhizobium ampelinum (strain ATCC BAA-846 / DSM 112012 / S4) (Agrobacterium vitis (strain S4)).